The primary structure comprises 173 residues: NADH-ubiquinone oxidoreductase chain 6 (173 aa).

5 helical membrane passes run 1 to 21 (MVYFMFIMLVGLILGLMAVAS), 25 to 45 (PYFAALGLVVAAGVGCGLLVG), 53 to 73 (LVLFLIYLGGMLVVFAYTAAL), 82 to 102 (WGDWSVLLYVSVYLLGIFFVG), and 141 to 161 (GIMLVLGGWVLLLTLFVILEL).

It belongs to the complex I subunit 6 family.

Its subcellular location is the mitochondrion membrane. It catalyses the reaction a ubiquinone + NADH + 5 H(+)(in) = a ubiquinol + NAD(+) + 4 H(+)(out). In terms of biological role, core subunit of the mitochondrial membrane respiratory chain NADH dehydrogenase (Complex I) that is believed to belong to the minimal assembly required for catalysis. Complex I functions in the transfer of electrons from NADH to the respiratory chain. The immediate electron acceptor for the enzyme is believed to be ubiquinone. The sequence is that of NADH-ubiquinone oxidoreductase chain 6 (MT-ND6) from Squalus acanthias (Spiny dogfish).